A 1400-amino-acid polypeptide reads, in one-letter code: Clustered mitochondria protein homolog (1400 aa).

3 disordered regions span residues 1–39, 56–78, and 212–243; these read MVSK…KEAS, GHDQ…QAED, and GDTG…KERP. Positions 56-69 are enriched in basic and acidic residues; the sequence is GHDQAEEADSKQDG. In terms of domain architecture, Clu spans 380–622; sequence RAEDAYTSRL…RTFPPDLNFL (243 aa). The tract at residues 684-741 is disordered; that stretch reads AALQDSNAAGAGSENKPLALESCDGTPDSPTSSESTLTPEDSEATTVSENSSAENQEA. A compositionally biased stretch (low complexity) spans 707–722; sequence DGTPDSPTSSESTLTP. Residues 727–741 show a composition bias toward polar residues; sequence ATTVSENSSAENQEA. TPR repeat units lie at residues 1088-1121, 1130-1163, 1172-1205, and 1214-1247; these read AFHF…FNNV, CACL…SERV, IQEY…MLVV, and ALLD…NTKY. Positions 1377–1388 are enriched in polar residues; the sequence is QDSGKIQEQQGS. The tract at residues 1377 to 1400 is disordered; that stretch reads QDSGKIQEQQGSHLELDDKLPVDD. Basic and acidic residues predominate over residues 1390 to 1400; the sequence is LELDDKLPVDD.

This sequence belongs to the CLU family.

It localises to the cytoplasm. In terms of biological role, mRNA-binding protein involved in proper cytoplasmic distribution of mitochondria. The protein is Clustered mitochondria protein homolog of Danio rerio (Zebrafish).